Here is a 594-residue protein sequence, read N- to C-terminus: P-granule-associated novel protein 1 (594 aa).

Residues M1–S18 form the signal peptide. At E19–G513 the chain is on the extracellular side. 15 LRR repeats span residues G78–N101, F103–S124, L125–G149, L150–E173, K175–G197, M198–G221, L222–A245, L246–K269, E271–D290, L291–L315, S318–H341, P343–Q365, L374–K397, L399–G419, and M420–S442. Residues W514–A534 traverse the membrane as a helical segment. The Cytoplasmic portion of the chain corresponds to M535–F594.

Interacts with glh-1. Interacts (via LRR regions) with myrf-1 (via C-terminus); the interaction promotes the role of myrf-1 in the synaptic remodeling of DD GABAergic motor neurons at the cell membrane. As to expression, expressed in the germline and somatic cells. In terms of tissue distribution, expressed in the germline and somatic cells. Expressed at higher levels in germline cells relative to somatic cells. Expressed in germline cells. As to expression, highly expressed in the pharynx and at lower levels in the intestine, but not detected in other tissues. Other studies suggest a broader expression pattern in somatic tissues: from embryogenesis to adult stages, expressed strongly in body wall muscle, vulva, somatic gonad and pharynx, at lower levels in the nerve ring, hypodermis, and rectal epithelia, and very weakly in the intestine.

Its subcellular location is the cytoplasm. It is found in the apical cell membrane. Its function is as follows. Regulates diverse developmental processes including larval molting and gonad maturation. In terms of biological role, promotes the localization of myrf-1 and myrf-2 to the cell membrane. In association with myrf-1, promotes the synaptic remodeling of DD GABAergic motor neurons whereby new synapses form in the dorsal processes of DD neurons. The polypeptide is P-granule-associated novel protein 1 (Caenorhabditis elegans).